The following is a 39-amino-acid chain: Potassium channel toxin alpha-KTx 2.16 (39 aa).

Cystine bridges form between C7-C29, C13-C34, and C17-C36. I39 is modified (isoleucine amide).

This sequence belongs to the short scorpion toxin superfamily. Potassium channel inhibitor family. Alpha-KTx 02 subfamily. In terms of tissue distribution, expressed by the venom gland.

The protein localises to the secreted. Functionally, blocks human voltage-gated potassium channels Kv1.2/KCNA2 (IC(50)=0.7 nM), Kv1.3/KCNA3 (IC(50)=26.2 nM) and blocks intermediate conductance calcium-activated potassium channel KCa3.1/KCNN4 (IC(50)=56 nM). The sequence is that of Potassium channel toxin alpha-KTx 2.16 from Centruroides tecomanus (Scorpion).